We begin with the raw amino-acid sequence, 523 residues long: 2,3-bisphosphoglycerate-independent phosphoglycerate mutase (523 aa).

Mn(2+) contacts are provided by Asp-13 and Ser-63. The active-site Phosphoserine intermediate is the Ser-63. Residues His-124, Arg-156–Asp-157, Arg-188, Arg-194, Arg-268–Arg-271, and Lys-341 contribute to the substrate site. 5 residues coordinate Mn(2+): Asp-408, His-412, Asp-449, His-450, and His-467.

This sequence belongs to the BPG-independent phosphoglycerate mutase family. Monomer. Requires Mn(2+) as cofactor.

It carries out the reaction (2R)-2-phosphoglycerate = (2R)-3-phosphoglycerate. The protein operates within carbohydrate degradation; glycolysis; pyruvate from D-glyceraldehyde 3-phosphate: step 3/5. In terms of biological role, catalyzes the interconversion of 2-phosphoglycerate and 3-phosphoglycerate. This is 2,3-bisphosphoglycerate-independent phosphoglycerate mutase from Salinibacter ruber (strain DSM 13855 / M31).